Reading from the N-terminus, the 483-residue chain is Rhamnulokinase (483 aa).

11–15 is an ATP binding site; it reads ASSGR. Substrate is bound by residues Gly79 and 234–236; that span reads HDT. The Proton acceptor role is filled by Asp235. Thr257 contributes to the ATP binding site. Asn294 is a binding site for substrate. Gln302 contributes to the ATP binding site. Cys352 and Cys369 are oxidised to a cystine. Gly401 contacts ATP.

Belongs to the rhamnulokinase family. Mg(2+) serves as cofactor.

The catalysed reaction is L-rhamnulose + ATP = L-rhamnulose 1-phosphate + ADP + H(+). Its pathway is carbohydrate degradation; L-rhamnose degradation; glycerone phosphate from L-rhamnose: step 2/3. Involved in the catabolism of L-rhamnose (6-deoxy-L-mannose). Catalyzes the transfer of the gamma-phosphate group from ATP to the 1-hydroxyl group of L-rhamnulose to yield L-rhamnulose 1-phosphate. The chain is Rhamnulokinase from Listeria innocua serovar 6a (strain ATCC BAA-680 / CLIP 11262).